A 209-amino-acid chain; its full sequence is Thymidine kinase (209 aa).

Residues 16–23 and 90–93 each bind ATP; these read GPMFAGKT and DEAQ. Residue Glu91 is the Proton acceptor of the active site.

It belongs to the thymidine kinase family. In terms of assembly, homotetramer.

Its subcellular location is the cytoplasm. The enzyme catalyses thymidine + ATP = dTMP + ADP + H(+). This chain is Thymidine kinase, found in Onion yellows phytoplasma (strain OY-M).